Here is a 590-residue protein sequence, read N- to C-terminus: FAD-linked oxidoreductase malF (590 aa).

The signal sequence occupies residues 1–18; the sequence is MKYTATFALLILAIGIQT. N-linked (GlcNAc...) asparagine glycosylation is found at asparagine 44, asparagine 80, asparagine 103, asparagine 178, and asparagine 396. One can recognise an FAD-binding PCMH-type domain in the interval 117–303; that stretch reads AQGRIPLYSA…TSVTLRAFAD (187 aa).

The protein belongs to the oxygen-dependent FAD-linked oxidoreductase family. Requires FAD as cofactor.

FAD-linked oxidoreductase; part of the gene cluster that mediates the biosynthesis of malbrancheamide, a dichlorinated fungal indole alkaloid that belongs to a family of natural products containing a characteristic bicyclo[2.2.2]diazaoctane core. The first step of malbrancheamide biosynthesis involves coupling of L-proline and L-tryptophan by malG, a bimodular NRPS, to produce L-Pro-L-Trp aldehyde through reductive offloading. This compound undergoes spontaneous cyclization and dehydration to give a dienamine which is reverse prenylated at C-2 by malE. The other prenyltransferase present in the cluster, malB, displays modest activity, suggesting that may be a redundant gene in the pathway. Subsequently, a [4+2] Diels-Alder cyclo-addition catalyzed by the bifunctional enzyme malC forms the characteristic bicyclo[2.2.2]diazaoctane ring of premalbrancheamid. Finally, the flavin-dependent halogenase malA catalyzes the iterative dichlorination of the indole ring of premalbrancheamide to yield C-9 monochlorinated malbrancheamide B, C-8 monochlorinated isomalbrancheamide B, and dichlorinated malbrancheamide. MalA is also able to brominate premalbrancheamide at C-9 to yield malbrancheamide C, and, to a lesser extend, at C-8 to yield isomalbrancheamide C. Finally, malA can brominate C-9 monochlorinated malbrancheamide B at C-8 to yield malbrancheamide D, or C-8 monochlorinated isomalbrancheamide B at C-9 to produce isomalbrancheamide D. The protein is FAD-linked oxidoreductase malF of Malbranchea aurantiaca.